The following is a 150-amino-acid chain: Large ribosomal subunit protein bL9 (150 aa).

Belongs to the bacterial ribosomal protein bL9 family.

Functionally, binds to the 23S rRNA. In Limosilactobacillus reuteri (strain DSM 20016) (Lactobacillus reuteri), this protein is Large ribosomal subunit protein bL9.